The sequence spans 59 residues: Potassium channel toxin alpha-KTx 15.4 (59 aa).

The N-terminal stretch at 1-22 (MKFSSIILLTLLICSMSIFGNC) is a signal peptide. Gln23 carries the post-translational modification Pyrrolidone carboxylic acid. Cystine bridges form between Cys30–Cys50, Cys35–Cys55, and Cys39–Cys57.

Expressed by the venom gland.

The protein localises to the secreted. Its function is as follows. Blocker of A-type voltage-gated potassium channels of cerebellar granular cells. May also inhibit Kv4/KCND when coexpressed with DPP6 or DPP10. The occlusion of the outer entry of the K(+) conducting pore is partially reversible and affects both open and closed channels. It shares the same target in rat brain than BmTX3 (AC Q8I0L5) and AmmTX3 (AC P60208). The protein is Potassium channel toxin alpha-KTx 15.4 of Androctonus australis (Sahara scorpion).